Reading from the N-terminus, the 87-residue chain is Putative defensin-like protein 235 (87 aa).

A signal peptide spans 1 to 26 (MRSATFFLVSCVLMSFVLSHVKEVEA). Intrachain disulfides connect Cys46/Cys73, Cys54/Cys82, and Cys71/Cys84.

This sequence belongs to the DEFL family.

Its subcellular location is the secreted. The chain is Putative defensin-like protein 235 (SCRL26) from Arabidopsis thaliana (Mouse-ear cress).